The chain runs to 401 residues: Imidazolonepropionase (401 aa).

Fe(3+)-binding residues include H70 and H72. The Zn(2+) site is built by H70 and H72. 3 residues coordinate 4-imidazolone-5-propanoate: R79, Y142, and H175. Y142 is a binding site for N-formimidoyl-L-glutamate. H240 contributes to the Fe(3+) binding site. Residue H240 coordinates Zn(2+). 4-imidazolone-5-propanoate is bound at residue Q243. D315 serves as a coordination point for Fe(3+). Position 315 (D315) interacts with Zn(2+). N-formimidoyl-L-glutamate-binding residues include N317 and G319. Position 320 (T320) interacts with 4-imidazolone-5-propanoate.

Belongs to the metallo-dependent hydrolases superfamily. HutI family. It depends on Zn(2+) as a cofactor. The cofactor is Fe(3+).

It is found in the cytoplasm. It carries out the reaction 4-imidazolone-5-propanoate + H2O = N-formimidoyl-L-glutamate. Its pathway is amino-acid degradation; L-histidine degradation into L-glutamate; N-formimidoyl-L-glutamate from L-histidine: step 3/3. In terms of biological role, catalyzes the hydrolytic cleavage of the carbon-nitrogen bond in imidazolone-5-propanoate to yield N-formimidoyl-L-glutamate. It is the third step in the universal histidine degradation pathway. The protein is Imidazolonepropionase of Caulobacter vibrioides (strain ATCC 19089 / CIP 103742 / CB 15) (Caulobacter crescentus).